A 349-amino-acid chain; its full sequence is DNA polymerase IV (349 aa).

The UmuC domain maps to 3–187; the sequence is VLFVDFDYFF…LDISKVPGVG (185 aa). Residues D7 and D105 each coordinate Mg(2+). E106 is a catalytic residue.

Belongs to the DNA polymerase type-Y family. Monomer. Mg(2+) is required as a cofactor.

The protein localises to the cytoplasm. The catalysed reaction is DNA(n) + a 2'-deoxyribonucleoside 5'-triphosphate = DNA(n+1) + diphosphate. Functionally, poorly processive, error-prone DNA polymerase involved in untargeted mutagenesis. Copies undamaged DNA at stalled replication forks, which arise in vivo from mismatched or misaligned primer ends. These misaligned primers can be extended by PolIV. Exhibits no 3'-5' exonuclease (proofreading) activity. May be involved in translesional synthesis. In Metallosphaera sedula (strain ATCC 51363 / DSM 5348 / JCM 9185 / NBRC 15509 / TH2), this protein is DNA polymerase IV.